A 214-amino-acid polypeptide reads, in one-letter code: Cytochrome b (214 aa).

A run of 4 helical transmembrane segments spans residues phenylalanine 31 to isoleucine 51, tryptophan 75 to isoleucine 96, tryptophan 111 to leucine 131, and phenylalanine 176 to leucine 196. Histidine 81 and histidine 95 together coordinate heme b. Positions 180 and 194 each coordinate heme b. Histidine 199 provides a ligand contact to a ubiquinone.

This sequence belongs to the cytochrome b family. In terms of assembly, the cytochrome bc1 complex contains 3 respiratory subunits (MT-CYB, CYC1 and UQCRFS1), 2 core proteins (UQCRC1 and UQCRC2) and probably 6 low-molecular weight proteins. Requires heme b as cofactor.

The protein resides in the mitochondrion inner membrane. Its function is as follows. Component of the ubiquinol-cytochrome c reductase complex (complex III or cytochrome b-c1 complex) that is part of the mitochondrial respiratory chain. The b-c1 complex mediates electron transfer from ubiquinol to cytochrome c. Contributes to the generation of a proton gradient across the mitochondrial membrane that is then used for ATP synthesis. This is Cytochrome b (MT-CYB) from Trimeresurus stejnegeri (Chinese green tree viper).